A 644-amino-acid polypeptide reads, in one-letter code: MEFYRSSRRLQILGSVILLLSIHVAHSFYLPGVAPQDFEKGDELKVKVNKLTSIKTQLPYSYYSLPFCRPKKIVDSTENLGEVLRGDRIENAPYSFKMREAQMCNVLGRVMLDAKSAKAFKEKIDDEYRVNMILDNLPLVVPIERIDPGQGSPSVVYQLGYHVGLKGQYEGSKEQKYFMHNHLAFTVRYHRDMQTDAARIVGFEVKPYSVKHEYEGQWSEKTRLTTCDPHTKRLVVSSATPQEVENKKEIIFTYDVDFQESEVKWASRWDAYLLMSDNQIHWFSIVNSLMIVLFLSGMVAMIMLRTLYRDISRYNELETQEEAQEETGWKLVHGDVFRPPANSDLLCVYVGTGVQCLGMVLVTMIFAMLGFLSPSNRGGLMTAMLLLWVFMGLFAGYASSRLYKMFKGTEWKRIAFRTAFLFPAVVSAIFFVLNALIWGQKSSGAVPFGTMFALIFLWFGISVPLVFVGAYLGFKKPPLDDPVKTNKIPRQIPEQAWYMNPIFSILIGGILPFGAVFIELFFILTSIWLNQFYYIFGFLFLVFVILMVTCAEITIVLCYFQLCSEDYLWWWRSYLTSGSSAVYLFLYAAFYFFTKLQITKLVSAMLYFGYMLIASYAFFVLTGTIGFYACLWFTRLIYSSVKID.

Residues 1–27 (MEFYRSSRRLQILGSVILLLSIHVAHS) form the signal peptide. The Lumenal segment spans residues 28–281 (FYLPGVAPQD…YLLMSDNQIH (254 aa)). Residues 282-302 (WFSIVNSLMIVLFLSGMVAMI) traverse the membrane as a helical segment. The Cytoplasmic portion of the chain corresponds to 303–351 (MLRTLYRDISRYNELETQEEAQEETGWKLVHGDVFRPPANSDLLCVYVG). A helical membrane pass occupies residues 352 to 372 (TGVQCLGMVLVTMIFAMLGFL). Residues 373 to 377 (SPSNR) are Lumenal-facing. Residues 378–398 (GGLMTAMLLLWVFMGLFAGYA) form a helical membrane-spanning segment. The Cytoplasmic portion of the chain corresponds to 399–418 (SSRLYKMFKGTEWKRIAFRT). The helical transmembrane segment at 419–439 (AFLFPAVVSAIFFVLNALIWG) threads the bilayer. At 440-451 (QKSSGAVPFGTM) the chain is on the lumenal side. Residues 452 to 472 (FALIFLWFGISVPLVFVGAYL) form a helical membrane-spanning segment. Over 473 to 501 (GFKKPPLDDPVKTNKIPRQIPEQAWYMNP) the chain is Cytoplasmic. The chain crosses the membrane as a helical span at residues 502–522 (IFSILIGGILPFGAVFIELFF). The Lumenal segment spans residues 523–534 (ILTSIWLNQFYY). A helical transmembrane segment spans residues 535 to 555 (IFGFLFLVFVILMVTCAEITI). Topologically, residues 556 to 573 (VLCYFQLCSEDYLWWWRS) are cytoplasmic. Residues 574–594 (YLTSGSSAVYLFLYAAFYFFT) form a helical membrane-spanning segment. The Lumenal portion of the chain corresponds to 595-600 (KLQITK). Residues 601–621 (LVSAMLYFGYMLIASYAFFVL) form a helical membrane-spanning segment. Over 622–644 (TGTIGFYACLWFTRLIYSSVKID) the chain is Cytoplasmic. The Endoplasmic reticulum export signal motif lies at 633 to 638 (FTRLIY). Positions 642–644 (KID) match the Golgi retention signal motif.

This sequence belongs to the nonaspanin (TM9SF) (TC 9.A.2) family.

It localises to the endosome membrane. The protein localises to the golgi apparatus membrane. This chain is Transmembrane 9 superfamily member 9, found in Arabidopsis thaliana (Mouse-ear cress).